Reading from the N-terminus, the 213-residue chain is Cell division protein SepF 2 (213 aa).

The interval 16-63 (EDDGYDGRGFDPDDDFEPELDPEPERDRRRHEPPHQSHQALHPQRDES) is disordered. Acidic residues predominate over residues 27–39 (PDDDFEPELDPEP).

It belongs to the SepF family. In terms of assembly, homodimer. Interacts with FtsZ.

It localises to the cytoplasm. Its function is as follows. Cell division protein that is part of the divisome complex and is recruited early to the Z-ring. Probably stimulates Z-ring formation, perhaps through the cross-linking of FtsZ protofilaments. Its function overlaps with FtsA. This chain is Cell division protein SepF 2, found in Streptomyces avermitilis (strain ATCC 31267 / DSM 46492 / JCM 5070 / NBRC 14893 / NCIMB 12804 / NRRL 8165 / MA-4680).